The chain runs to 308 residues: Oxygen-dependent coproporphyrinogen-III oxidase (308 aa).

Serine 97 is a binding site for substrate. Positions 101 and 111 each coordinate a divalent metal cation. Residue histidine 111 is the Proton donor of the active site. Substrate is bound at residue 113–115 (NVR). Residues histidine 153 and histidine 183 each coordinate a divalent metal cation. Residues 248 to 283 (YVEFNLVWDRGTHFGLQSGGRTESILMSMPPLASWS) form an important for dimerization region. Residue 266-268 (GGR) participates in substrate binding.

It belongs to the aerobic coproporphyrinogen-III oxidase family. In terms of assembly, homodimer. A divalent metal cation is required as a cofactor.

The protein resides in the cytoplasm. It carries out the reaction coproporphyrinogen III + O2 + 2 H(+) = protoporphyrinogen IX + 2 CO2 + 2 H2O. The protein operates within porphyrin-containing compound metabolism; protoporphyrin-IX biosynthesis; protoporphyrinogen-IX from coproporphyrinogen-III (O2 route): step 1/1. Functionally, involved in the heme biosynthesis. Catalyzes the aerobic oxidative decarboxylation of propionate groups of rings A and B of coproporphyrinogen-III to yield the vinyl groups in protoporphyrinogen-IX. This is Oxygen-dependent coproporphyrinogen-III oxidase from Polaromonas sp. (strain JS666 / ATCC BAA-500).